Reading from the N-terminus, the 257-residue chain is Adenylate kinase (257 aa).

An ATP-binding site is contributed by 52–57; that stretch reads GAGKGT. The interval 72–101 is NMP; the sequence is ATGDMLRSQVAKKTELGKEAKKIMDQGGLV. AMP is bound by residues Thr-73, Arg-78, 99–101, 128–131, and Gln-135; these read GLV and GFPR. Residues 169 to 206 are LID; that stretch reads GRLVHPASGRSYHKIFNPPKNEMLDDITGEPLIQRSDD. ATP-binding positions include Arg-170 and 179–180; that span reads SY. Positions 203 and 214 each coordinate AMP. ATP is bound at residue Gln-242.

It belongs to the adenylate kinase family. AK2 subfamily. As to quaternary structure, monomer.

It is found in the cytoplasm. It localises to the cytosol. The protein localises to the mitochondrion intermembrane space. It carries out the reaction AMP + ATP = 2 ADP. Functionally, catalyzes the reversible transfer of the terminal phosphate group between ATP and AMP. Plays an important role in cellular energy homeostasis and in adenine nucleotide metabolism. Adenylate kinase activity is critical for regulation of the phosphate utilization and the AMP de novo biosynthesis pathways. The polypeptide is Adenylate kinase (adk1) (Aspergillus clavatus (strain ATCC 1007 / CBS 513.65 / DSM 816 / NCTC 3887 / NRRL 1 / QM 1276 / 107)).